The primary structure comprises 1043 residues: Isoleucine--tRNA ligase (1043 aa).

Positions 49-59 (PFATGLPHYGH) match the 'HIGH' region motif. The 'KMSKS' region signature appears at 592–596 (KMSKR). Lys-595 serves as a coordination point for ATP.

This sequence belongs to the class-I aminoacyl-tRNA synthetase family. IleS type 2 subfamily. As to quaternary structure, monomer. Requires Zn(2+) as cofactor.

It is found in the cytoplasm. The enzyme catalyses tRNA(Ile) + L-isoleucine + ATP = L-isoleucyl-tRNA(Ile) + AMP + diphosphate. Functionally, catalyzes the attachment of isoleucine to tRNA(Ile). As IleRS can inadvertently accommodate and process structurally similar amino acids such as valine, to avoid such errors it has two additional distinct tRNA(Ile)-dependent editing activities. One activity is designated as 'pretransfer' editing and involves the hydrolysis of activated Val-AMP. The other activity is designated 'posttransfer' editing and involves deacylation of mischarged Val-tRNA(Ile). The protein is Isoleucine--tRNA ligase of Chlamydia caviae (strain ATCC VR-813 / DSM 19441 / 03DC25 / GPIC) (Chlamydophila caviae).